Consider the following 275-residue polypeptide: Lectin DB58 (275 aa).

An N-terminal signal peptide occupies residues 1–22 (MASSTVSVVLSLFLLLLTQAYS). N-linked (GlcNAc...) asparagine glycans are attached at residues asparagine 34 and asparagine 101.

This sequence belongs to the leguminous lectin family. In terms of assembly, heterodimer, composed of an alpha and a beta subunit derived from a single precursor. Leu-264 is missing in a major portion of the beta subunit, suggesting an origin by sequential removal of amino acids rather than a processing by endoproteolytic cleavage.

Functionally, metalloglycoprotein, containing Ca, Mg, Mn, and Zn and the carbohydrates galactose, glucosamine, mannose, and fucose. It agglutinates erythrocytes of blood group A1. This Vigna unguiculata subsp. cylindrica (Horse gram) protein is Lectin DB58.